The primary structure comprises 438 residues: L-cysteine:1D-myo-inositol 2-amino-2-deoxy-alpha-D-glucopyranoside ligase (438 aa).

The disordered stretch occupies residues 1 to 27; it reads MDSWTSPDVPALPFTAEGPRVHDTARG. Cysteine 45 contributes to the Zn(2+) binding site. L-cysteinyl-5'-AMP contacts are provided by residues 45 to 48, threonine 60, and 83 to 85; these read CGIT and NVT. Residues 47-57 carry the 'HIGH' region motif; the sequence is ITPYDATHLGH. The short motif at 197–202 is the 'ERGGDP' region element; sequence DRGGDP. Tryptophan 238 serves as a coordination point for L-cysteinyl-5'-AMP. Cysteine 242 is a Zn(2+) binding site. 260 to 262 lines the L-cysteinyl-5'-AMP pocket; it reads GDD. Histidine 267 contributes to the Zn(2+) binding site. Residue valine 293 coordinates L-cysteinyl-5'-AMP. The 'KMSKS' region signature appears at 299–303; that stretch reads KMSKS.

This sequence belongs to the class-I aminoacyl-tRNA synthetase family. MshC subfamily. As to quaternary structure, monomer. Zn(2+) is required as a cofactor.

The enzyme catalyses 1D-myo-inositol 2-amino-2-deoxy-alpha-D-glucopyranoside + L-cysteine + ATP = 1D-myo-inositol 2-(L-cysteinylamino)-2-deoxy-alpha-D-glucopyranoside + AMP + diphosphate + H(+). In terms of biological role, catalyzes the ATP-dependent condensation of GlcN-Ins and L-cysteine to form L-Cys-GlcN-Ins. The protein is L-cysteine:1D-myo-inositol 2-amino-2-deoxy-alpha-D-glucopyranoside ligase of Kytococcus sedentarius (strain ATCC 14392 / DSM 20547 / JCM 11482 / CCUG 33030 / NBRC 15357 / NCTC 11040 / CCM 314 / 541) (Micrococcus sedentarius).